Consider the following 644-residue polypeptide: 3D-(3,5/4)-trihydroxycyclohexane-1,2-dione hydrolase (644 aa).

Residue glutamate 65 coordinates thiamine diphosphate. Residues 442-522 (SLPGDLQRMW…INVLLFDNSG (81 aa)) form a thiamine pyrophosphate binding region. Mg(2+)-binding residues include aspartate 493 and asparagine 520.

This sequence belongs to the TPP enzyme family. Mg(2+) is required as a cofactor. It depends on thiamine diphosphate as a cofactor.

It catalyses the reaction 3D-3,5/4-trihydroxycyclohexane-1,2-dione + H2O = 5-deoxy-D-glucuronate + H(+). It functions in the pathway polyol metabolism; myo-inositol degradation into acetyl-CoA; acetyl-CoA from myo-inositol: step 3/7. Involved in the cleavage of the C1-C2 bond of 3D-(3,5/4)-trihydroxycyclohexane-1,2-dione (THcHDO) to yield 5-deoxy-glucuronate (5DG). The chain is 3D-(3,5/4)-trihydroxycyclohexane-1,2-dione hydrolase from Bacillus anthracis (strain A0248).